A 145-amino-acid polypeptide reads, in one-letter code: D-aminoacyl-tRNA deacylase (145 aa).

The Gly-cisPro motif, important for rejection of L-amino acids motif lies at 137 to 138 (GP).

The protein belongs to the DTD family. As to quaternary structure, homodimer.

It is found in the cytoplasm. The enzyme catalyses glycyl-tRNA(Ala) + H2O = tRNA(Ala) + glycine + H(+). The catalysed reaction is a D-aminoacyl-tRNA + H2O = a tRNA + a D-alpha-amino acid + H(+). Its function is as follows. An aminoacyl-tRNA editing enzyme that deacylates mischarged D-aminoacyl-tRNAs. Also deacylates mischarged glycyl-tRNA(Ala), protecting cells against glycine mischarging by AlaRS. Acts via tRNA-based rather than protein-based catalysis; rejects L-amino acids rather than detecting D-amino acids in the active site. By recycling D-aminoacyl-tRNA to D-amino acids and free tRNA molecules, this enzyme counteracts the toxicity associated with the formation of D-aminoacyl-tRNA entities in vivo and helps enforce protein L-homochirality. This Salmonella typhimurium (strain LT2 / SGSC1412 / ATCC 700720) protein is D-aminoacyl-tRNA deacylase.